The chain runs to 76 residues: MTEDLSQLSFEDALAQLEEIVRQLEGGQLRLQDAIASYERGAALRRYCDTKLNEADARVQAIIQRADGALETKSMD.

This sequence belongs to the XseB family. As to quaternary structure, heterooligomer composed of large and small subunits.

It is found in the cytoplasm. It catalyses the reaction Exonucleolytic cleavage in either 5'- to 3'- or 3'- to 5'-direction to yield nucleoside 5'-phosphates.. Bidirectionally degrades single-stranded DNA into large acid-insoluble oligonucleotides, which are then degraded further into small acid-soluble oligonucleotides. The sequence is that of Exodeoxyribonuclease 7 small subunit from Gluconacetobacter diazotrophicus (strain ATCC 49037 / DSM 5601 / CCUG 37298 / CIP 103539 / LMG 7603 / PAl5).